The following is a 442-amino-acid chain: Histidine--tRNA ligase (442 aa).

It belongs to the class-II aminoacyl-tRNA synthetase family. In terms of assembly, homodimer.

Its subcellular location is the cytoplasm. The enzyme catalyses tRNA(His) + L-histidine + ATP = L-histidyl-tRNA(His) + AMP + diphosphate + H(+). This is Histidine--tRNA ligase from Rhodopirellula baltica (strain DSM 10527 / NCIMB 13988 / SH1).